Here is a 408-residue protein sequence, read N- to C-terminus: AA9 family lytic polysaccharide monooxygenase A (408 aa).

The first 20 residues, 1-20, serve as a signal peptide directing secretion; sequence MKTTTYSLLALAAASKLASA. 2 residues coordinate Cu(2+): histidine 21 and histidine 103. Residues cysteine 63 and cysteine 186 are joined by a disulfide bond. Residue asparagine 151 is glycosylated (N-linked (GlcNAc...) asparagine). Histidine 172 lines the O2 pocket. Position 183 (tyrosine 183) interacts with Cu(2+). 2 N-linked (GlcNAc...) asparagine glycosylation sites follow: asparagine 331 and asparagine 381. A CBM1 domain is found at 369 to 405; it reads GVAKQYERCGGINHTGPTTCESGSVCKKWNPYYYQCV.

The protein belongs to the polysaccharide monooxygenase AA9 family. It depends on Cu(2+) as a cofactor.

It is found in the secreted. It catalyses the reaction [(1-&gt;4)-beta-D-glucosyl]n+m + reduced acceptor + O2 = 4-dehydro-beta-D-glucosyl-[(1-&gt;4)-beta-D-glucosyl]n-1 + [(1-&gt;4)-beta-D-glucosyl]m + acceptor + H2O.. Functionally, lytic polysaccharide monooxygenase (LPMO) that depolymerizes crystalline and amorphous polysaccharides via the oxidation of scissile alpha- or beta-(1-4)-glycosidic bonds, yielding C4 oxidation products. Catalysis by LPMOs requires the reduction of the active-site copper from Cu(II) to Cu(I) by a reducing agent and H(2)O(2) or O(2) as a cosubstrate. In Aspergillus kawachii (strain NBRC 4308) (White koji mold), this protein is AA9 family lytic polysaccharide monooxygenase A (eglD).